A 1642-amino-acid chain; its full sequence is Coiled-coil domain-containing protein 7A (1642 aa).

The interval Pro-21 to Leu-51 is disordered. The LRR 1 repeat unit spans residues Val-161–Ala-184. The stretch at Leu-279 to Glu-330 forms a coiled coil. The stretch at Ile-1310–Thr-1333 is one LRR 2 repeat.

Exclusively expressed in the testes.

The protein is Coiled-coil domain-containing protein 7A of Mus musculus (Mouse).